The primary structure comprises 309 residues: Porphobilinogen deaminase (309 aa).

Cys-241 is subject to S-(dipyrrolylmethanemethyl)cysteine.

Belongs to the HMBS family. In terms of assembly, monomer. Dipyrromethane is required as a cofactor.

The catalysed reaction is 4 porphobilinogen + H2O = hydroxymethylbilane + 4 NH4(+). It participates in porphyrin-containing compound metabolism; protoporphyrin-IX biosynthesis; coproporphyrinogen-III from 5-aminolevulinate: step 2/4. In terms of biological role, tetrapolymerization of the monopyrrole PBG into the hydroxymethylbilane pre-uroporphyrinogen in several discrete steps. This chain is Porphobilinogen deaminase, found in Bacillus cereus (strain ATCC 10987 / NRS 248).